Reading from the N-terminus, the 720-residue chain is DNA ligase (720 aa).

NAD(+) contacts are provided by residues 60 to 64, 109 to 110, and Glu140; these read DYDYD and SL. Catalysis depends on Lys142, which acts as the N6-AMP-lysine intermediate. 2 residues coordinate NAD(+): Arg163 and Glu201. The segment at 220 to 239 is disordered; sequence GLPPFANPRNAAAGSIRQKD. Residues Lys320 and Lys344 each coordinate NAD(+). Positions 438, 441, 456, and 461 each coordinate Zn(2+). Residues 619 to 709 form the BRCT domain; sequence KVADVLKGKT…VDLEKIKKED (91 aa).

The protein belongs to the NAD-dependent DNA ligase family. LigA subfamily. Mn(2+) serves as cofactor. Requires Mg(2+) as cofactor.

It carries out the reaction NAD(+) + (deoxyribonucleotide)n-3'-hydroxyl + 5'-phospho-(deoxyribonucleotide)m = (deoxyribonucleotide)n+m + AMP + beta-nicotinamide D-nucleotide.. DNA ligase that catalyzes the formation of phosphodiester linkages between 5'-phosphoryl and 3'-hydroxyl groups in double-stranded DNA using NAD as a coenzyme and as the energy source for the reaction. It is essential for DNA replication and repair of damaged DNA. This Aquifex aeolicus (strain VF5) protein is DNA ligase.